A 300-amino-acid chain; its full sequence is NAD kinase (300 aa).

Asp-75 acts as the Proton acceptor in catalysis. Residues 75-76 (DG), 149-150 (ND), Arg-177, Asp-179, 190-195 (TAYALS), Ala-214, and Gln-248 each bind NAD(+).

This sequence belongs to the NAD kinase family. A divalent metal cation is required as a cofactor.

It localises to the cytoplasm. The catalysed reaction is NAD(+) + ATP = ADP + NADP(+) + H(+). Its function is as follows. Involved in the regulation of the intracellular balance of NAD and NADP, and is a key enzyme in the biosynthesis of NADP. Catalyzes specifically the phosphorylation on 2'-hydroxyl of the adenosine moiety of NAD to yield NADP. The polypeptide is NAD kinase (Paraburkholderia phytofirmans (strain DSM 17436 / LMG 22146 / PsJN) (Burkholderia phytofirmans)).